Here is a 958-residue protein sequence, read N- to C-terminus: Translation initiation factor IF-2 (958 aa).

Residues 50–67 are compositionally biased toward low complexity; that stretch reads FKPAAAPKVEAKPAAPKV. 2 disordered regions span residues 50–224 and 288–374; these read FKPA…RIDF and EVVP…HELP. 3 stretches are compositionally biased toward basic and acidic residues: residues 68 to 89, 96 to 118, and 138 to 153; these read SAEK…EEAK, SAEK…EAKP, and FKAE…AERR. Low complexity predominate over residues 157 to 169; that stretch reads KGNNRDQQQNGNR. 2 stretches are compositionally biased toward basic and acidic residues: residues 185–195 and 290–323; these read RDNRRFNDQAK and VPEK…DGPR. Positions 337–346 are enriched in low complexity; it reads NQKNSNWNNN. The segment covering 365 to 374 has biased composition (basic and acidic residues); it reads VTERKFHELP. Positions 460-627 constitute a tr-type G domain; it reads ERPPVVTIMG…TVLLVAEIQE (168 aa). A G1 region spans residues 469–476; that stretch reads GHVDHGKT. 469–476 provides a ligand contact to GTP; that stretch reads GHVDHGKT. The segment at 494 to 498 is G2; that stretch reads GITQH. A G3 region spans residues 515 to 518; that stretch reads DTPG. Residues 515–519 and 569–572 each bind GTP; these read DTPGH and NKID. The tract at residues 569-572 is G4; it reads NKID. The interval 605–607 is G5; sequence SAK.

The protein belongs to the TRAFAC class translation factor GTPase superfamily. Classic translation factor GTPase family. IF-2 subfamily.

Its subcellular location is the cytoplasm. In terms of biological role, one of the essential components for the initiation of protein synthesis. Protects formylmethionyl-tRNA from spontaneous hydrolysis and promotes its binding to the 30S ribosomal subunits. Also involved in the hydrolysis of GTP during the formation of the 70S ribosomal complex. In Streptococcus pneumoniae serotype 4 (strain ATCC BAA-334 / TIGR4), this protein is Translation initiation factor IF-2.